Reading from the N-terminus, the 89-residue chain is Ixosin-B (89 aa).

Positions 1–26 (MASGWTHRLLLLAAVVTLGATPIAAA) are cleaved as a signal peptide. Residues 27-57 (SMEYLVTAPGYLTPNADIKITAVVTNPSSAG) constitute a propeptide that is removed on maturation. Residues 68-89 (SGIQPEQHSSGKSDVRRWRSRY) form a disordered region. Positions 76–89 (SSGKSDVRRWRSRY) are enriched in basic and acidic residues.

Its function is as follows. Has antifungal activity against C.albicans. Has antibacterial activity against the Gram-positive bacterium S.aureus and the Gram-negative bacterium E.coli. Lacks hemolytic activity against rabbit erythrocytes. This chain is Ixosin-B, found in Ixodes sinensis (Hard tick).